Consider the following 209-residue polypeptide: Uracil phosphoribosyltransferase (209 aa).

Residues Arg-79, Arg-104, and 131–139 (DPLLATGNS) each bind 5-phospho-alpha-D-ribose 1-diphosphate. Residues Ile-194 and 199–201 (GDA) contribute to the uracil site. Residue Asp-200 coordinates 5-phospho-alpha-D-ribose 1-diphosphate.

The protein belongs to the UPRTase family. Mg(2+) serves as cofactor.

It catalyses the reaction UMP + diphosphate = 5-phospho-alpha-D-ribose 1-diphosphate + uracil. It functions in the pathway pyrimidine metabolism; UMP biosynthesis via salvage pathway; UMP from uracil: step 1/1. With respect to regulation, allosterically activated by GTP. In terms of biological role, catalyzes the conversion of uracil and 5-phospho-alpha-D-ribose 1-diphosphate (PRPP) to UMP and diphosphate. The protein is Uracil phosphoribosyltransferase of Rhodococcus opacus (strain B4).